Consider the following 246-residue polypeptide: Large ribosomal subunit protein uL3 (246 aa).

Disordered stretches follow at residues 140-162 (SHRS…NKKM) and 215-246 (DVPL…EENA). Position 151 is an N5-methylglutamine (Gln-151). The segment covering 234–246 (EAAPEAPASEENA) has biased composition (low complexity).

This sequence belongs to the universal ribosomal protein uL3 family. Part of the 50S ribosomal subunit. Forms a cluster with proteins L14 and L19. Post-translationally, methylated by PrmB.

Functionally, one of the primary rRNA binding proteins, it binds directly near the 3'-end of the 23S rRNA, where it nucleates assembly of the 50S subunit. This chain is Large ribosomal subunit protein uL3, found in Methylorubrum extorquens (strain PA1) (Methylobacterium extorquens).